The primary structure comprises 312 residues: Aspartate carbamoyltransferase catalytic subunit (312 aa).

Carbamoyl phosphate contacts are provided by R55 and T56. K83 contacts L-aspartate. The carbamoyl phosphate site is built by R105, H133, and Q136. L-aspartate is bound by residues R166 and R220. Carbamoyl phosphate-binding residues include G261 and P262.

It belongs to the aspartate/ornithine carbamoyltransferase superfamily. ATCase family. As to quaternary structure, heterododecamer (2C3:3R2) of six catalytic PyrB chains organized as two trimers (C3), and six regulatory PyrI chains organized as three dimers (R2).

It carries out the reaction carbamoyl phosphate + L-aspartate = N-carbamoyl-L-aspartate + phosphate + H(+). The protein operates within pyrimidine metabolism; UMP biosynthesis via de novo pathway; (S)-dihydroorotate from bicarbonate: step 2/3. In terms of biological role, catalyzes the condensation of carbamoyl phosphate and aspartate to form carbamoyl aspartate and inorganic phosphate, the committed step in the de novo pyrimidine nucleotide biosynthesis pathway. This is Aspartate carbamoyltransferase catalytic subunit from Prosthecochloris aestuarii (strain DSM 271 / SK 413).